Here is a 1012-residue protein sequence, read N- to C-terminus: Ubiquitin-like modifier-activating enzyme 7 (1012 aa).

A 1-1 repeat occupies 23–159 (GSPAMQRIQG…DTRGLVGQLF (137 aa)). Positions 23-575 (GSPAMQRIQG…GTWGSATVFM (553 aa)) are 2 approximate repeats. A Phosphoserine modification is found at Ser266. The 1-2 repeat unit spans residues 423-575 (GAGFQEKLRR…GTWGSATVFM (153 aa)). ATP is bound at residue 442 to 471 (AIGCELLKVFALVGLGAGNSGGLTVVDMDH). Residue Cys599 is the Glycyl thioester intermediate of the active site.

The protein belongs to the ubiquitin-activating E1 family. As to quaternary structure, (Microbial infection) Interacts with human cytomegalovirus proteins NEC2/UL50 and UL26; these interactions inhibit ISGylation and cause proteasomal degradation of UBA7. In terms of assembly, (Microbial infection) Interacts with rotavirus non-structural protein 5 (NSP5); this interaction promotes UBA7 proteasomal degradation. Monomer. Binds and is involved in the conjugation of G1P2/ISG15. Post-translationally, ISGylated. Ubiquitinated by RNF170. Expressed in a variety of normal and tumor cell types, but is reduced in lung cancer cell lines.

It localises to the cytoplasm. Its subcellular location is the nucleus. The protein operates within protein modification; protein ubiquitination. Its function is as follows. E1-activating enzyme that catalyzes the covalent conjugation of the ubiquitin-like protein product of ISG15 to additional interferon stimulated proteins (ISGs) as well as other cellular proteins such as P53 in a process termed protein ISGylation. Plays an essential role in antiviral immunity together with ISG15 by restricting the replication of many viruses including rabies virus, influenza virus, sindbis virus, rotavirus or human cytomegalovirus. For example, ISG15 modification of influenza A protein NS1 disrupts the association of the NS1 with importin-alpha leading to NS1 nuclear import inhibition. ISGylation of human cytomegalovirs protein UL26 regulates its stability and inhibits its activities to suppress NF-kappa-B signaling. This chain is Ubiquitin-like modifier-activating enzyme 7, found in Homo sapiens (Human).